Here is a 574-residue protein sequence, read N- to C-terminus: Myo-inositol transporter FST1 (574 aa).

At 1–76 (MGKSRQNSTT…VQFANPKHFT (76 aa)) the chain is on the cytoplasmic side. The chain crosses the membrane as a helical span at residues 77-97 (WLLVAFASMGGLLSGLDQSLI). At 98–115 (SGANLFLPDDLGLTEHEN) the chain is on the extracellular side. The chain crosses the membrane as a helical span at residues 116–136 (SLVNSGMPLGAVGGALLLSPA). The Cytoplasmic segment spans residues 137-143 (NEYFGRK). A helical transmembrane segment spans residues 144–164 (GAIIISIILYTIGAALEAGSI). At 165–173 (NFGMIVSSR) the chain is on the extracellular side. Residues 174-194 (VILGLGVGLEGGTVPVYVAET) traverse the membrane as a helical segment. Residues 195–205 (VERRIRGNLVS) lie on the Cytoplasmic side of the membrane. Residues 206–226 (LYQFNIALGEVLGYAVGAIFL) traverse the membrane as a helical segment. The Extracellular segment spans residues 227-233 (NVPGNWR). The chain crosses the membrane as a helical span at residues 234 to 254 (YILGSSLLFSTIMFFGMLFLP). Over 255-330 (ESPRFLIHQK…RARRALVYAN (76 aa)) the chain is Cytoplasmic. Residues 331-351 (IMILLGQLTGVNAIMYYMSVL) form a helical membrane-spanning segment. Residues 352 to 363 (MNQIGFDKKESN) are Extracellular-facing. The chain crosses the membrane as a helical span at residues 364–384 (YMSLVGGGSLLLGTIPAIFLM). At 385-390 (ERFGRR) the chain is on the cytoplasmic side. Residues 391–411 (FWAITMLPGFFIGLVLIGVSY) form a helical membrane-spanning segment. Over 412-426 (QFDVETQLQTVEGLY) the chain is Extracellular. The helical transmembrane segment at 427–447 (LSGLIIYMGFFGSYACLTWVV) threads the bilayer. The Cytoplasmic portion of the chain corresponds to 448–465 (PSEVYPTYLRSYGMTTSD). Residues 466–486 (ALLFLASFIVTYNFTAMQNAM) form a helical membrane-spanning segment. At 487-490 (GKTG) the chain is on the extracellular side. Residues 491–511 (LALGFYGGIAFIGEIYQIFFM) form a helical membrane-spanning segment. At 512–574 (PETKNKTLEE…PKDQVQVSHA (63 aa)) the chain is on the cytoplasmic side.

This sequence belongs to the major facilitator superfamily. Sugar transporter (TC 2.A.1.1) family.

It is found in the cell membrane. It carries out the reaction myo-inositol(out) + H(+)(out) = myo-inositol(in) + H(+)(in). Functionally, transporter for myo-inositol. Also appears to transport the polyketide mycotoxin fumonisin B1 (FB1). Does not appear to transport hexose sugars. This chain is Myo-inositol transporter FST1, found in Gibberella moniliformis (strain M3125 / FGSC 7600) (Maize ear and stalk rot fungus).